The following is a 351-amino-acid chain: UDP-3-O-acylglucosamine N-acyltransferase (351 aa).

Residue histidine 240 is the Proton acceptor of the active site.

Belongs to the transferase hexapeptide repeat family. LpxD subfamily. In terms of assembly, homotrimer.

It carries out the reaction a UDP-3-O-[(3R)-3-hydroxyacyl]-alpha-D-glucosamine + a (3R)-hydroxyacyl-[ACP] = a UDP-2-N,3-O-bis[(3R)-3-hydroxyacyl]-alpha-D-glucosamine + holo-[ACP] + H(+). The protein operates within bacterial outer membrane biogenesis; LPS lipid A biosynthesis. In terms of biological role, catalyzes the N-acylation of UDP-3-O-acylglucosamine using 3-hydroxyacyl-ACP as the acyl donor. Is involved in the biosynthesis of lipid A, a phosphorylated glycolipid that anchors the lipopolysaccharide to the outer membrane of the cell. The polypeptide is UDP-3-O-acylglucosamine N-acyltransferase (Pseudomonas fluorescens (strain ATCC BAA-477 / NRRL B-23932 / Pf-5)).